Here is a 203-residue protein sequence, read N- to C-terminus: Translation machinery-associated protein 16 (203 aa).

The segment at 1 to 39 (MPKAPKGKSAGREKKVIHPYSRKAAQITREAHKQEKKEK) is disordered. S9 bears the ADP-ribosylserine mark. The span at 29–39 (REAHKQEKKEK) shows a compositional bias: basic and acidic residues.

It belongs to the TMA16 family. Associates with pre-60S ribosomal particles.

It is found in the nucleus. Involved in the biogenesis of the 60S ribosomal subunit in the nucleus. In Homo sapiens (Human), this protein is Translation machinery-associated protein 16 (TMA16).